The primary structure comprises 184 residues: MDTSLISIIIIAIALAMDAFSVSLTKGFTQKNLTKSQILYYGLFFGFFQFIMPVIGYICGTTISSFVSTVAPWIAFFLLLAIGLNMIRESLDSDDEYIMDTFSFKELTLLAVATSIDAFAVGITFALLNMSLLLPCTIIGIVAFIFSISGIFIGKKLGNYFGDKFEILGGAVLILIGIKILLGY.

Helical transmembrane passes span 5-25 (LISI…VSLT), 38-58 (ILYY…IGYI), 67-87 (VSTV…LNMI), 107-127 (LTLL…TFAL), 133-153 (LLPC…GIFI), and 164-184 (KFEI…LLGY).

It belongs to the MntP (TC 9.B.29) family.

Its subcellular location is the cell membrane. Functionally, probably functions as a manganese efflux pump. The polypeptide is Putative manganese efflux pump MntP (Methanobrevibacter smithii (strain ATCC 35061 / DSM 861 / OCM 144 / PS)).